A 511-amino-acid polypeptide reads, in one-letter code: Keratin, type II cytoskeletal 72 (511 aa).

The tract at residues 1–124 is head; sequence MSRQLTHFPR…DPEIQRVRAQ (124 aa). Residues 125-160 form a coil 1A region; it reads EREQIKALNNKFASFIDKVRFLEQQNQVLETKWNLL. Residues 125-438 form the IF rod domain; the sequence is EREQIKALNN…KLLESEECRM (314 aa). A linker 1 region spans residues 161-179; it reads QQLDLNNCRKNLEPIYEGY. The segment at 180-271 is coil 1B; sequence ISNLQKQLEM…CLYEGEITQI (92 aa). Residues 272-295 form a linker 12 region; that stretch reads QSHISDTSIVLSMDNNRDLDLDSI. Residues 296-434 form a coil 2 region; the sequence is IAEVRAQYEE…ATYRKLLESE (139 aa). Positions 435–511 are tail; it reads ECRMSGEYPN…SSCATKKASR (77 aa). The disordered stretch occupies residues 486 to 511; it reads GSCGSELKDPLAKTSGSSCATKKASR.

This sequence belongs to the intermediate filament family. As to quaternary structure, heterotetramer of two type I and two type II keratins. As to expression, highly expressed in hair follicles from scalp and eyebrow. Also expressed in palmoplantar epidermis. Not expressed in face skin despite the presence of fine hairs histologically. In hair, it is specifically present in the inner root sheath (IRS) of the hair follicle. Present in the IRS cuticle, but not in Henle or Huxley layers of the IRS. In the IRS cuticle, its presence is delayed up to the height of the apex of the dermal papilla (at protein level).

Its function is as follows. Has a role in hair formation. Specific component of keratin intermediate filaments in the inner root sheath (IRS) of the hair follicle. The polypeptide is Keratin, type II cytoskeletal 72 (KRT72) (Homo sapiens (Human)).